We begin with the raw amino-acid sequence, 126 residues long: Gas vesicle protein J (126 aa).

This sequence belongs to the gas vesicle GvpA family. As to quaternary structure, interacts with GvpA.

It localises to the gas vesicle. Functionally, a minor component of the gas vesicle, might be involved in nucleating gas vesicle formation. Gas vesicles (GV) are hollow, gas filled proteinaceous nanostructures. During planktonic growth they allow positioning of the organism at a favorable depth for light or nutrient acquisition. This Pseudanabaena galeata (strain PCC 6901) protein is Gas vesicle protein J.